The primary structure comprises 403 residues: Argininosuccinate synthase (403 aa).

ATP is bound at residue 10–18 (AYSGGLDTS). Tyr-87 contacts L-citrulline. ATP is bound at residue Gly-117. L-aspartate contacts are provided by Thr-119, Asn-123, and Asp-124. Asn-123 contributes to the L-citrulline binding site. 5 residues coordinate L-citrulline: Arg-127, Ser-175, Ser-184, Glu-260, and Tyr-272.

Belongs to the argininosuccinate synthase family. Type 1 subfamily. Homotetramer.

It localises to the cytoplasm. It catalyses the reaction L-citrulline + L-aspartate + ATP = 2-(N(omega)-L-arginino)succinate + AMP + diphosphate + H(+). It functions in the pathway amino-acid biosynthesis; L-arginine biosynthesis; L-arginine from L-ornithine and carbamoyl phosphate: step 2/3. This chain is Argininosuccinate synthase, found in Bacillus licheniformis (strain ATCC 14580 / DSM 13 / JCM 2505 / CCUG 7422 / NBRC 12200 / NCIMB 9375 / NCTC 10341 / NRRL NRS-1264 / Gibson 46).